Here is a 548-residue protein sequence, read N- to C-terminus: Probable malate:quinone oxidoreductase (548 aa).

Residues 521 to 548 form a disordered region; that stretch reads DKPQAADSTPKPQLKPQPVQKEVADIAL. Low complexity predominate over residues 530–541; it reads PKPQLKPQPVQK.

It belongs to the MQO family. FAD is required as a cofactor.

It catalyses the reaction (S)-malate + a quinone = a quinol + oxaloacetate. It participates in carbohydrate metabolism; tricarboxylic acid cycle; oxaloacetate from (S)-malate (quinone route): step 1/1. This is Probable malate:quinone oxidoreductase from Escherichia coli O139:H28 (strain E24377A / ETEC).